We begin with the raw amino-acid sequence, 219 residues long: uncharacterized protein (219 aa).

The disordered stretch occupies residues 42-71; the sequence is RQPRVVPVTSSDPEVVDDEDDEDQSDDSDE. Residues 45-54 are compositionally biased toward low complexity; that stretch reads RVVPVTSSDP. Acidic residues predominate over residues 55–71; sequence EVVDDEDDEDQSDDSDE.

This is an uncharacterized protein from Dryophytes versicolor (chameleon treefrog).